We begin with the raw amino-acid sequence, 570 residues long: Zeta-carotene desaturase, chloroplastic/chromoplastic (570 aa).

A compositionally biased stretch (low complexity) spans 1–16; that stretch reads MASVAATTTLAPALAP. Residues 1–33 are disordered; it reads MASVAATTTLAPALAPRRARPGTGLVPPRRASA.

Belongs to the zeta carotene desaturase family. It depends on NAD(+) as a cofactor. Requires NADP(+) as cofactor. FAD is required as a cofactor.

It is found in the plastid. Its subcellular location is the chloroplast. The protein localises to the chromoplast. It catalyses the reaction 9,9'-di-cis-zeta-carotene + 2 a quinone = 7,7',9,9'-tetra-cis-lycopene + 2 a quinol. It participates in carotenoid biosynthesis; lycopene biosynthesis. Its function is as follows. Catalyzes the conversion of zeta-carotene to lycopene via the intermediary of neurosporene. It carries out two consecutive desaturations (introduction of double bonds) at positions C-7 and C-7'. This chain is Zeta-carotene desaturase, chloroplastic/chromoplastic (ZDS1), found in Zea mays (Maize).